A 226-amino-acid polypeptide reads, in one-letter code: tRNA (guanine-N(1)-)-methyltransferase (226 aa).

Residues Gly110 and 129-134 (IGDYIL) each bind S-adenosyl-L-methionine.

It belongs to the RNA methyltransferase TrmD family. As to quaternary structure, homodimer.

It localises to the cytoplasm. The enzyme catalyses guanosine(37) in tRNA + S-adenosyl-L-methionine = N(1)-methylguanosine(37) in tRNA + S-adenosyl-L-homocysteine + H(+). Its function is as follows. Specifically methylates guanosine-37 in various tRNAs. In Malacoplasma penetrans (strain HF-2) (Mycoplasma penetrans), this protein is tRNA (guanine-N(1)-)-methyltransferase.